Reading from the N-terminus, the 771-residue chain is Transducin-like enhancer protein 3-B (771 aa).

A q domain region spans residues Met1 to Gln141. The segment covering Gln137 to His148 has biased composition (low complexity). Disordered stretches follow at residues Gln137–Ser174 and His196–Leu360. The interval His142–Asn209 is GP domain. The span at His196–Ser206 shows a compositional bias: basic and acidic residues. Low complexity predominate over residues Ser207 to Ser217. The segment at Asn210–Pro278 is ccN domain. 2 stretches are compositionally biased toward basic and acidic residues: residues Arg219–Asp257 and Gly282–Ala293. A Nuclear localization signal motif is present at residues Lys235–Arg238. The interval Pro279–Val451 is SP domain. Positions Pro294–Ser309 are enriched in low complexity. 2 positions are modified to phosphoserine: Ser296 and Ser299. The span at Lys310–Lys319 shows a compositional bias: basic and acidic residues. Polar residues predominate over residues Ser320 to Pro332. WD repeat units follow at residues Ser483 to Pro521, Asn529 to Lys568, Ser573 to Gln612, Gly615 to Gln654, Asp656 to Leu695, Leu697 to Gln736, and Lys738 to Tyr771.

Belongs to the WD repeat Groucho/TLE family. As to expression, at gastrulation, expression is absent within the axial mesoderm. After gastrulation is complete, expressed in the presomitic mesoderm, but expression in the tailbud doesn't begin until the six to seven somite stage, after which it becomes abundant. Expression is abundant throughout somitogenesis within the posterior half of the somites, but is absent from older somites. Also expressed in a dynamic manner within the neural plate.

The protein localises to the nucleus. In terms of biological role, transcriptional corepressor that binds to a number of transcription factors. Inhibits the transcriptional activation mediated by CTNNB1 and TCF family members in Wnt signaling. The effects of full-length TLE family members may be modulated by association with dominant-negative AES. This Danio rerio (Zebrafish) protein is Transducin-like enhancer protein 3-B.